Reading from the N-terminus, the 273-residue chain is Glutamate 5-kinase (273 aa).

K15 is a binding site for ATP. Residues S55, D142, and N158 each contribute to the substrate site. ATP is bound by residues 178 to 179 (SD) and 220 to 226 (TGGMLSK).

It belongs to the glutamate 5-kinase family.

It localises to the cytoplasm. The catalysed reaction is L-glutamate + ATP = L-glutamyl 5-phosphate + ADP. The protein operates within amino-acid biosynthesis; L-proline biosynthesis; L-glutamate 5-semialdehyde from L-glutamate: step 1/2. Functionally, catalyzes the transfer of a phosphate group to glutamate to form L-glutamate 5-phosphate. This Streptococcus pyogenes serotype M2 (strain MGAS10270) protein is Glutamate 5-kinase.